A 544-amino-acid chain; its full sequence is CTP synthase (544 aa).

Residues 1 to 267 (MSKFVFVTGG…GDLLVSRLHL (267 aa)) form an amidoligase domain region. Position 13 (S13) interacts with CTP. A UTP-binding site is contributed by S13. Residue 14 to 19 (SVGKGI) coordinates ATP. Y54 contacts L-glutamine. An ATP-binding site is contributed by D71. Positions 71 and 141 each coordinate Mg(2+). Residues 148-150 (DIE), 188-193 (KTKPTQ), and K224 each bind CTP. Residues 188 to 193 (KTKPTQ) and K224 each bind UTP. In terms of domain architecture, Glutamine amidotransferase type-1 spans 299–534 (YVELKDAYYS…INAAKKVIRD (236 aa)). G354 provides a ligand contact to L-glutamine. The active-site Nucleophile; for glutamine hydrolysis is the C381. L-glutamine is bound by residues 382-385 (LGMQ), E405, and R462. Residues H507 and E509 contribute to the active site.

It belongs to the CTP synthase family. Homotetramer.

It catalyses the reaction UTP + L-glutamine + ATP + H2O = CTP + L-glutamate + ADP + phosphate + 2 H(+). The catalysed reaction is L-glutamine + H2O = L-glutamate + NH4(+). The enzyme catalyses UTP + NH4(+) + ATP = CTP + ADP + phosphate + 2 H(+). It functions in the pathway pyrimidine metabolism; CTP biosynthesis via de novo pathway; CTP from UDP: step 2/2. Allosterically activated by GTP, when glutamine is the substrate; GTP has no effect on the reaction when ammonia is the substrate. The allosteric effector GTP functions by stabilizing the protein conformation that binds the tetrahedral intermediate(s) formed during glutamine hydrolysis. Inhibited by the product CTP, via allosteric rather than competitive inhibition. Functionally, catalyzes the ATP-dependent amination of UTP to CTP with either L-glutamine or ammonia as the source of nitrogen. Regulates intracellular CTP levels through interactions with the four ribonucleotide triphosphates. The chain is CTP synthase from Dehalococcoides mccartyi (strain ATCC BAA-2266 / KCTC 15142 / 195) (Dehalococcoides ethenogenes (strain 195)).